The following is a 288-amino-acid chain: Phospholipid phosphatase 2 (288 aa).

The Cytoplasmic portion of the chain corresponds to 1–4 (MQRR). Residues 5–25 (WVFVLLDVLCLLVASLPFAIL) traverse the membrane as a helical segment. At 26-51 (TLVNAPYKRGFYCGDDSIRYPYRPDT) the chain is on the lumenal side. A helical membrane pass occupies residues 52 to 72 (ITHGLMAGVTITATVILVSAG). The Cytoplasmic segment spans residues 73 to 87 (EAYLVYTDRLYSRSD). A helical transmembrane segment spans residues 88–108 (FNNYVAAVYKVLGTFLFGAAV). The Lumenal portion of the chain corresponds to 109–162 (SQSLTDLAKYMIGRLRPNFLAVCDPDWSRVNCSVYVQLEKVCRGNPADVTEARL). The segment at 117 to 125 (KYMIGRLRP) is phosphatase sequence motif I. N-linked (GlcNAc...) asparagine glycosylation is present at N139. A helical transmembrane segment spans residues 163 to 183 (SFYSGHSSFGMYCMVFLALYV). The phosphatase sequence motif II stretch occupies residues 165-168 (YSGH). The active-site Proton donors is H168. The Cytoplasmic portion of the chain corresponds to 184–196 (QARLCWKWARLLR). Residues 197-217 (PTVQFFLVAFALYVGYTRVSD) traverse the membrane as a helical segment. Positions 213–224 (TRVSDYKHHWSD) are phosphatase sequence motif III. Residues 218-226 (YKHHWSDVL) lie on the Lumenal side of the membrane. H220 (nucleophile) is an active-site residue. A helical membrane pass occupies residues 227–247 (VGLLQGALVAALTVCYISDFF). The Cytoplasmic portion of the chain corresponds to 248–288 (KARPPQHCLKEEELERKPSLSLTLTLGEADHNHYGYPHSSS).

It belongs to the PA-phosphatase related phosphoesterase family. Forms functional homodimers and homooligomers. Can also form heterooligomers with PLPP1 and PLPP3. Post-translationally, N-glycosylated. In terms of tissue distribution, found mainly in brain, pancreas and placenta.

Its subcellular location is the membrane. The protein resides in the cell membrane. It localises to the early endosome membrane. The protein localises to the endoplasmic reticulum membrane. The enzyme catalyses a 1,2-diacyl-sn-glycero-3-phosphate + H2O = a 1,2-diacyl-sn-glycerol + phosphate. It carries out the reaction 1,2-dihexadecanoyl-sn-glycero-3-phosphate + H2O = 1,2-dihexadecanoyl-sn-glycerol + phosphate. It catalyses the reaction 1,2-di-(9Z-octadecenoyl)-sn-glycero-3-phosphate + H2O = 1,2-di-(9Z-octadecenoyl)-sn-glycerol + phosphate. The catalysed reaction is a monoacyl-sn-glycero-3-phosphate + H2O = a monoacylglycerol + phosphate. The enzyme catalyses (9Z)-octadecenoyl-sn-glycero-3-phosphate + H2O = (9Z-octadecenoyl)-glycerol + phosphate. It carries out the reaction sphing-4-enine 1-phosphate + H2O = sphing-4-enine + phosphate. It catalyses the reaction an N-acylsphing-4-enine 1-phosphate + H2O = an N-acylsphing-4-enine + phosphate. The catalysed reaction is N-(octanoyl)-sphing-4-enine-1-phosphate + H2O = N-octanoylsphing-4-enine + phosphate. The enzyme catalyses N-(9Z-octadecenoyl)-ethanolamine phosphate + H2O = N-(9Z-octadecenoyl) ethanolamine + phosphate. The protein operates within lipid metabolism; phospholipid metabolism. With respect to regulation, magnesium-independent phospholipid phosphatase. Insensitive to N-ethylmaleimide. Inhibited by sphingosine, zinc ions and modestly by propanolol. Functionally, magnesium-independent phospholipid phosphatase that catalyzes the dephosphorylation of a variety of glycerolipid and sphingolipid phosphate esters including phosphatidate/PA, lysophosphatidate/LPA, sphingosine 1-phosphate/S1P and ceramide 1-phosphate/C1P. Has no apparent extracellular phosphatase activity and therefore most probably acts intracellularly. Also acts on N-oleoyl ethanolamine phosphate/N-(9Z-octadecenoyl)-ethanolamine phosphate, a potential physiological compound. Through dephosphorylation of these bioactive lipid mediators produces new bioactive compounds and may regulate signal transduction in different cellular processes. Indirectly regulates, for instance, cell cycle G1/S phase transition through its phospholipid phosphatase activity. The chain is Phospholipid phosphatase 2 from Homo sapiens (Human).